The chain runs to 461 residues: MADVKIGFEVHVQLDTRTKLFCDCPTDYEDAEPNENTCPVCTGMPGAKPLPPNEEALLIALEIAHMLDCEPVLDRPLYFQRKHYDYPDLPSGYQRTSVPIAVNGELDGVRIREIHVEEDPGRWEPSTGRVDYNRSGVPLIEIVTEPDMRSPEEARDFLRRLMQVLRYSGKVKGDGGIRVDANVSVEGGARVEIKNINSIKGVYRALRFEIQRQLNLMKHGREVRRETRAFREDQGTTVAMRSKETAEDYRYIPDPDIPVFEITEDLWEKAVARAPEPPHHRARRMAEEYGISLEAAEALVTEREWADFFEEVVEKAPDDWDIEFIDQWVRKEIKKILNKKEMTFREAKITPEEFIELLELVREDKITRQNALNALWEAVDSDKSPVEIIEENGLLKVSDEDRLARVVEEVIEENPQAVEDYKSGKEEAIHYLMGQVMRKTRGQADPEVTMRLLRERLDSDG.

It belongs to the GatB/GatE family. GatB subfamily. As to quaternary structure, heterotrimer of A, B and C subunits.

The enzyme catalyses L-glutamyl-tRNA(Gln) + L-glutamine + ATP + H2O = L-glutaminyl-tRNA(Gln) + L-glutamate + ADP + phosphate + H(+). It catalyses the reaction L-aspartyl-tRNA(Asn) + L-glutamine + ATP + H2O = L-asparaginyl-tRNA(Asn) + L-glutamate + ADP + phosphate + 2 H(+). In terms of biological role, allows the formation of correctly charged Asn-tRNA(Asn) or Gln-tRNA(Gln) through the transamidation of misacylated Asp-tRNA(Asn) or Glu-tRNA(Gln) in organisms which lack either or both of asparaginyl-tRNA or glutaminyl-tRNA synthetases. The reaction takes place in the presence of glutamine and ATP through an activated phospho-Asp-tRNA(Asn) or phospho-Glu-tRNA(Gln). This chain is Aspartyl/glutamyl-tRNA(Asn/Gln) amidotransferase subunit B, found in Methanopyrus kandleri (strain AV19 / DSM 6324 / JCM 9639 / NBRC 100938).